Here is a 352-residue protein sequence, read N- to C-terminus: MTELELLGPRASGQPLGTAILKAVAEDFQVDEVLDIPLSGQGEHLWLWVEKRDLNTEEAARRLARAAGVPVRSISYAGLKDRQALTRQWFSLHLPGKADPDLSRAEDATLRVLKQVRHQRKLQRGAHSANGFTLRLTALAADHAALDARLQTLKQQGVPNYFGGQRFGHGGGNVQDAQHWAARKALPEQRNVRSRLLSAARSYLFNQVLAARVADGSWQRAQVGDLLAFTDSRSFFSAGEQECSDPRLAILDLHPTGPMWGEGPSPAAGAALTLETAIGQQHALLCQWLANAGMSHERRILRLPIGGLTWHYPEPDILQLEFVLPAGCFATVVVRELVDLVPAGQTDSPCVF.

The Nucleophile role is filled by Asp-81. One can recognise a TRUD domain in the interval 157 to 303 (GVPNYFGGQR…MSHERRILRL (147 aa)).

It belongs to the pseudouridine synthase TruD family.

The catalysed reaction is uridine(13) in tRNA = pseudouridine(13) in tRNA. In terms of biological role, responsible for synthesis of pseudouridine from uracil-13 in transfer RNAs. The polypeptide is tRNA pseudouridine synthase D (Pseudomonas putida (strain W619)).